The following is a 228-amino-acid chain: Aquaporin Z 2 (228 aa).

Transmembrane regions (helical) follow at residues 9–29 (FFGTFWLVFGGCGSAVFAAAF) and 34–54 (IGFTGVALAFGLTVLTMAYAV). The NPA 1 signature appears at 63-65 (NPA). Helical transmembrane passes span 82 to 102 (VPYVIAQVAGAIVAAAALYVI), 129 to 149 (LVSALLIEIILTAFFLIVILG), and 158 to 178 (GFAPIAIGLALTLIHLISIPV). The short motif at 184–186 (NPA) is the NPA 2 element. The chain crosses the membrane as a helical span at residues 204–224 (WLFWLAPIVGGAAGAVIWKLF).

Belongs to the MIP/aquaporin (TC 1.A.8) family. In terms of assembly, homotetramer.

The protein resides in the cell inner membrane. The enzyme catalyses H2O(in) = H2O(out). Its function is as follows. Channel that permits osmotically driven movement of water in both directions. It is involved in the osmoregulation and in the maintenance of cell turgor during volume expansion in rapidly growing cells. It mediates rapid entry or exit of water in response to abrupt changes in osmolarity. In Agrobacterium fabrum (strain C58 / ATCC 33970) (Agrobacterium tumefaciens (strain C58)), this protein is Aquaporin Z 2.